We begin with the raw amino-acid sequence, 165 residues long: MPRILGIDPGSRITGYGVVEGSGSAPRHVASGCVRLPTGPFPDRLRVLYRALSELLAQHRPEAAVVEQVFVSRNPDSALKLGQARGAAICACVNAGLPVAEYTPGEIKQALVGHGRAGKAQVGYMVRMLLRLDATPAEDAGDALAAALCHLHQADMQARLRRAGA.

Active-site residues include aspartate 8, glutamate 67, and aspartate 139. Aspartate 8, glutamate 67, and aspartate 139 together coordinate Mg(2+).

This sequence belongs to the RuvC family. In terms of assembly, homodimer which binds Holliday junction (HJ) DNA. The HJ becomes 2-fold symmetrical on binding to RuvC with unstacked arms; it has a different conformation from HJ DNA in complex with RuvA. In the full resolvosome a probable DNA-RuvA(4)-RuvB(12)-RuvC(2) complex forms which resolves the HJ. The cofactor is Mg(2+).

Its subcellular location is the cytoplasm. It carries out the reaction Endonucleolytic cleavage at a junction such as a reciprocal single-stranded crossover between two homologous DNA duplexes (Holliday junction).. In terms of biological role, the RuvA-RuvB-RuvC complex processes Holliday junction (HJ) DNA during genetic recombination and DNA repair. Endonuclease that resolves HJ intermediates. Cleaves cruciform DNA by making single-stranded nicks across the HJ at symmetrical positions within the homologous arms, yielding a 5'-phosphate and a 3'-hydroxyl group; requires a central core of homology in the junction. The consensus cleavage sequence is 5'-(A/T)TT(C/G)-3'. Cleavage occurs on the 3'-side of the TT dinucleotide at the point of strand exchange. HJ branch migration catalyzed by RuvA-RuvB allows RuvC to scan DNA until it finds its consensus sequence, where it cleaves and resolves the cruciform DNA. The sequence is that of Crossover junction endodeoxyribonuclease RuvC from Alkalilimnicola ehrlichii (strain ATCC BAA-1101 / DSM 17681 / MLHE-1).